The chain runs to 491 residues: 3-octaprenyl-4-hydroxybenzoate carboxy-lyase (491 aa).

Mn(2+) is bound at residue Asn172. Residues 175 to 177, 189 to 191, and 194 to 195 each bind prenylated FMN; these read IYR, RWL, and RG. Position 238 (Glu238) interacts with Mn(2+). Residue Asp287 is the Proton donor of the active site.

It belongs to the UbiD family. Homohexamer. It depends on prenylated FMN as a cofactor. Requires Mn(2+) as cofactor.

The protein localises to the cell membrane. It catalyses the reaction a 4-hydroxy-3-(all-trans-polyprenyl)benzoate + H(+) = a 2-(all-trans-polyprenyl)phenol + CO2. Its pathway is cofactor biosynthesis; ubiquinone biosynthesis. Functionally, catalyzes the decarboxylation of 3-octaprenyl-4-hydroxy benzoate to 2-octaprenylphenol, an intermediate step in ubiquinone biosynthesis. The chain is 3-octaprenyl-4-hydroxybenzoate carboxy-lyase from Klebsiella pneumoniae subsp. pneumoniae (strain ATCC 700721 / MGH 78578).